A 69-amino-acid polypeptide reads, in one-letter code: MDFQDIIFLMMDIKIEIYQDEKDMEKTEVAVKTEKTAIPFKWENPLEDTYTKMGYSESSPISAGGTFMG.

This is an uncharacterized protein from Bacillus anthracis.